Reading from the N-terminus, the 88-residue chain is Small ribosomal subunit protein uS17 (88 aa).

Belongs to the universal ribosomal protein uS17 family. In terms of assembly, part of the 30S ribosomal subunit.

Functionally, one of the primary rRNA binding proteins, it binds specifically to the 5'-end of 16S ribosomal RNA. This chain is Small ribosomal subunit protein uS17, found in Ruthia magnifica subsp. Calyptogena magnifica.